Reading from the N-terminus, the 188-residue chain is dCTP deaminase (188 aa).

DCTP-binding positions include lysine 111–arginine 116, threonine 135–glutamate 137, glutamine 156, tyrosine 170, and glutamine 180. Residue glutamate 137 is the Proton donor/acceptor of the active site.

Belongs to the dCTP deaminase family. Homotrimer.

It carries out the reaction dCTP + H2O + H(+) = dUTP + NH4(+). It functions in the pathway pyrimidine metabolism; dUMP biosynthesis; dUMP from dCTP (dUTP route): step 1/2. Catalyzes the deamination of dCTP to dUTP. This is dCTP deaminase from Nitrosomonas eutropha (strain DSM 101675 / C91 / Nm57).